The chain runs to 395 residues: NAD(P)H-quinone oxidoreductase subunit H (395 aa).

The protein belongs to the complex I 49 kDa subunit family. In terms of assembly, NDH-1 can be composed of about 15 different subunits; different subcomplexes with different compositions have been identified which probably have different functions.

It is found in the cellular thylakoid membrane. The enzyme catalyses a plastoquinone + NADH + (n+1) H(+)(in) = a plastoquinol + NAD(+) + n H(+)(out). The catalysed reaction is a plastoquinone + NADPH + (n+1) H(+)(in) = a plastoquinol + NADP(+) + n H(+)(out). Its function is as follows. NDH-1 shuttles electrons from an unknown electron donor, via FMN and iron-sulfur (Fe-S) centers, to quinones in the respiratory and/or the photosynthetic chain. The immediate electron acceptor for the enzyme in this species is believed to be plastoquinone. Couples the redox reaction to proton translocation, and thus conserves the redox energy in a proton gradient. Cyanobacterial NDH-1 also plays a role in inorganic carbon-concentration. This is NAD(P)H-quinone oxidoreductase subunit H from Prochlorococcus marinus (strain MIT 9312).